Consider the following 452-residue polypeptide: PHO85 cyclin CLG1 (452 aa).

Belongs to the cyclin family. PCL1,2 subfamily. As to quaternary structure, forms a cyclin-CDK complex with PHO85.

Its function is as follows. Cyclin partner of the cyclin-dependent kinase (CDK) PHO85. Has a role in cell integrity and polarized cell growth together with the other PCL1/PCL2 cyclin family members. The polypeptide is PHO85 cyclin CLG1 (CLG1) (Saccharomyces cerevisiae (strain ATCC 204508 / S288c) (Baker's yeast)).